Here is a 300-residue protein sequence, read N- to C-terminus: Tyrosine recombinase XerC (300 aa).

One can recognise a Core-binding (CB) domain in the interval 2–87; the sequence is TSLSPLLEKF…SIKSFYKYLV (86 aa). The Tyr recombinase domain maps to 108-294; the sequence is TLPKVLPVEE…TWEQLQQVYD (187 aa). Active-site residues include Arg-148, Lys-172, His-246, Arg-249, and His-272. Catalysis depends on Tyr-281, which acts as the O-(3'-phospho-DNA)-tyrosine intermediate.

Belongs to the 'phage' integrase family. XerC subfamily. Forms a cyclic heterotetrameric complex composed of two molecules of XerC and two molecules of XerD.

It is found in the cytoplasm. Site-specific tyrosine recombinase, which acts by catalyzing the cutting and rejoining of the recombining DNA molecules. The XerC-XerD complex is essential to convert dimers of the bacterial chromosome into monomers to permit their segregation at cell division. It also contributes to the segregational stability of plasmids. In Myxococcus xanthus, this protein is Tyrosine recombinase XerC.